A 114-amino-acid polypeptide reads, in one-letter code: Large ribosomal subunit protein uL22c (114 aa).

It belongs to the universal ribosomal protein uL22 family. In terms of assembly, part of the 50S ribosomal subunit.

It localises to the plastid. Its subcellular location is the chloroplast. This protein binds specifically to 23S rRNA. Functionally, the globular domain of the protein is located near the polypeptide exit tunnel on the outside of the subunit, while an extended beta-hairpin is found that lines the wall of the exit tunnel in the center of the 70S ribosome. This Gracilaria tenuistipitata (Red alga) protein is Large ribosomal subunit protein uL22c (rpl22).